Reading from the N-terminus, the 197-residue chain is Small ribosomal subunit protein uS7 (197 aa).

Belongs to the universal ribosomal protein uS7 family. In terms of assembly, part of the 30S ribosomal subunit.

Its function is as follows. One of the primary rRNA binding proteins, it binds directly to 16S rRNA where it nucleates assembly of the head domain of the 30S subunit. Is located at the subunit interface close to the decoding center. This Methanopyrus kandleri (strain AV19 / DSM 6324 / JCM 9639 / NBRC 100938) protein is Small ribosomal subunit protein uS7.